Here is a 274-residue protein sequence, read N- to C-terminus: Bis(5'-nucleosyl)-tetraphosphatase, symmetrical (274 aa).

This sequence belongs to the Ap4A hydrolase family.

The enzyme catalyses P(1),P(4)-bis(5'-adenosyl) tetraphosphate + H2O = 2 ADP + 2 H(+). Its function is as follows. Hydrolyzes diadenosine 5',5'''-P1,P4-tetraphosphate to yield ADP. The polypeptide is Bis(5'-nucleosyl)-tetraphosphatase, symmetrical (apaH) (Buchnera aphidicola subsp. Acyrthosiphon pisum (strain APS) (Acyrthosiphon pisum symbiotic bacterium)).